The primary structure comprises 354 residues: Histidinol-phosphate aminotransferase (354 aa).

K208 is subject to N6-(pyridoxal phosphate)lysine.

Belongs to the class-II pyridoxal-phosphate-dependent aminotransferase family. Histidinol-phosphate aminotransferase subfamily. Homodimer. Pyridoxal 5'-phosphate is required as a cofactor.

It carries out the reaction L-histidinol phosphate + 2-oxoglutarate = 3-(imidazol-4-yl)-2-oxopropyl phosphate + L-glutamate. It participates in amino-acid biosynthesis; L-histidine biosynthesis; L-histidine from 5-phospho-alpha-D-ribose 1-diphosphate: step 7/9. The chain is Histidinol-phosphate aminotransferase from Aquifex aeolicus (strain VF5).